The primary structure comprises 189 residues: ATP-dependent protease subunit HslV (189 aa).

Residue T12 is part of the active site. The Na(+) site is built by A172, C175, and T178.

Belongs to the peptidase T1B family. HslV subfamily. In terms of assembly, a double ring-shaped homohexamer of HslV is capped on each side by a ring-shaped HslU homohexamer. The assembly of the HslU/HslV complex is dependent on binding of ATP.

The protein resides in the cytoplasm. The enzyme catalyses ATP-dependent cleavage of peptide bonds with broad specificity.. With respect to regulation, allosterically activated by HslU binding. In terms of biological role, protease subunit of a proteasome-like degradation complex believed to be a general protein degrading machinery. This Anaplasma phagocytophilum (strain HZ) protein is ATP-dependent protease subunit HslV.